Consider the following 120-residue polypeptide: Glycine cleavage system H protein (120 aa).

The 83-residue stretch at 17–99 (VATVGITAHA…MGAGWFFKLK (83 aa)) folds into the Lipoyl-binding domain. K58 bears the N6-lipoyllysine mark.

The protein belongs to the GcvH family. The glycine cleavage system is composed of four proteins: P, T, L and H. Requires (R)-lipoate as cofactor.

Its function is as follows. The glycine cleavage system catalyzes the degradation of glycine. The H protein shuttles the methylamine group of glycine from the P protein to the T protein. This is Glycine cleavage system H protein from Rhizobium rhizogenes (strain K84 / ATCC BAA-868) (Agrobacterium radiobacter).